Reading from the N-terminus, the 345-residue chain is WD40 repeat protein poxJ (345 aa).

4 WD repeats span residues 15–49, 59–100, 101–146, and 250–284; these read ANPP…YDVS, LFNF…EAQQ, VAAH…PLAT, and VNDV…RLKS.

It belongs to the WD repeat rae1 family.

Its pathway is secondary metabolite biosynthesis. Its function is as follows. WD40 repeat protein; part of the gene cluster that mediates the biosynthesis of oxaleimides, cytotoxic compounds containing an unusual disubstituted succinimide moiety. The first step of the pathway is provided by the HR-PKS poxF that serves in a new mode of collaborative biosynthesis with the PKS-NRPS poxE, by providing the olefin containing amino acid substrate via the synthesis of an ACP-bound dec-4-enoate. The cytochrome P450 monooxygenase poxM-catalyzed oxidation at the alpha-position creates the enzyme-bound 2-hydroxydec-4-enoyl-ACP thioester, which may be prone to spontaneous hydrolysis to yield 2-hydroxydec-4-enoic acid due to increased electrophilicity of the carbonyl. 2-hydroxydec-4-enoic acid can then be further oxidized by poxM to yield the alpha-ketoacid 2-oxodec-4-enoicacid, which is reductively aminated by the aminotransferase poxL to yield (S,E)-2-aminodec-4-enoic acid. The Hybrid PKS-NRPS synthetase poxE then performs condensation between the octaketide product of its PKS modules and the amino group of (S,E)-2-aminodec-4-enoic acid which is activated and incorporated by the adenylation domain. The resulting aminoacyl product can be cyclized by the Diels-Alderase PoxQ and reductively released by the reductive (R) domain of poxE to yield an aldehyde intermediate. The released aldehyde is then substrate for a Knoevenagel condensation by the hydrolyase poxO followed by an oxidation at the 5-position of the pyrrolidone ring. The presence of the olefin from the amino acid building block allows for migration of the substituted allyl group to occur. This allylic transposition reaction takes place in a conjugate addition, semipinacol-like fashion to yield a succinimide intermediate. Iterative two-electron oxidations of the C7 methyl of the succinimide intermediate to the carboxylic acid can be catalyzed by one of two remaining cytochrome P450 monooxygenasess poxC or poxD to yield oxaleimide A. Subsequent oxidation yields the maleimide scaffold oxaleimide I. Both oxaleimide A and oxaleimide I can undergo oxidative modifications in the decalin ring to yield the series of products oxaleimides B to H. The sequence is that of WD40 repeat protein poxJ from Penicillium oxalicum (strain 114-2 / CGMCC 5302) (Penicillium decumbens).